Consider the following 359-residue polypeptide: Nicotinate-nucleotide--dimethylbenzimidazole phosphoribosyltransferase (359 aa).

Catalysis depends on glutamate 318, which acts as the Proton acceptor.

The protein belongs to the CobT family. As to quaternary structure, homodimer.

It carries out the reaction 5,6-dimethylbenzimidazole + nicotinate beta-D-ribonucleotide = alpha-ribazole 5'-phosphate + nicotinate + H(+). It functions in the pathway nucleoside biosynthesis; alpha-ribazole biosynthesis; alpha-ribazole from 5,6-dimethylbenzimidazole: step 1/2. In terms of biological role, catalyzes the synthesis of alpha-ribazole-5'-phosphate from nicotinate mononucleotide (NAMN) and 5,6-dimethylbenzimidazole (DMB). In Escherichia coli (strain UTI89 / UPEC), this protein is Nicotinate-nucleotide--dimethylbenzimidazole phosphoribosyltransferase.